The following is a 183-amino-acid chain: Glutamyl-tRNA(Gln) amidotransferase subunit F, mitochondrial (183 aa).

This sequence belongs to the GatF family. In terms of assembly, subunit of the heterotrimeric GatFAB amidotransferase (AdT) complex, composed of A (HER2), B (PET112) and F (YGR102C) subunits.

It is found in the mitochondrion inner membrane. It carries out the reaction L-glutamyl-tRNA(Gln) + L-glutamine + ATP + H2O = L-glutaminyl-tRNA(Gln) + L-glutamate + ADP + phosphate + H(+). Its function is as follows. Allows the formation of correctly charged Gln-tRNA(Gln) through the transamidation of misacylated Glu-tRNA(Gln) in the mitochondria. The reaction takes place in the presence of glutamine and ATP through an activated gamma-phospho-Glu-tRNA(Gln). Required for proper protein synthesis within the mitochondrion. The sequence is that of Glutamyl-tRNA(Gln) amidotransferase subunit F, mitochondrial from Saccharomyces cerevisiae (strain ATCC 204508 / S288c) (Baker's yeast).